Consider the following 516-residue polypeptide: Beta-glucosidase 1 (516 aa).

The first 21 residues, Met-1–Ala-21, serve as a signal peptide directing secretion. Gln-68 provides a ligand contact to a beta-D-glucoside. Asn-96 is a glycosylation site (N-linked (GlcNAc...) asparagine). A beta-D-glucoside contacts are provided by residues His-169 and Asn-214 to Glu-215. Glu-215 (proton donor) is an active-site residue. Cys-234 and Cys-237 are joined by a disulfide. Asn-290 carries N-linked (GlcNAc...) asparagine glycosylation. Tyr-353 contributes to the a beta-D-glucoside binding site. Residue Asn-364 is glycosylated (N-linked (GlcNAc...) asparagine). Residue Glu-424 participates in a beta-D-glucoside binding. The active-site Nucleophile is Glu-424. A glycan (N-linked (GlcNAc...) asparagine) is linked at Asn-432. A beta-D-glucoside contacts are provided by residues Trp-471, Glu-478–Trp-479, and Phe-487.

It belongs to the glycosyl hydrolase 1 family.

It carries out the reaction Hydrolysis of terminal, non-reducing beta-D-glucosyl residues with release of beta-D-glucose.. The protein is Beta-glucosidase 1 (BGLU1) of Oryza sativa subsp. japonica (Rice).